Here is a 348-residue protein sequence, read N- to C-terminus: Ion-translocating oxidoreductase complex subunit D (348 aa).

3 helical membrane passes run 25–45, 68–88, and 124–144; these read ILAA…GTFI, PISP…IGVA, and AMAA…TWAA. An FMN phosphoryl threonine modification is found at T182. Transmembrane regions (helical) follow at residues 211–231, 237–257, 263–283, 296–316, and 317–337; these read TGEG…FLLA, WHIS…GFGA, ASPL…FIAT, LLFG…GGYP, and DGVA…DYYI.

The protein belongs to the NqrB/RnfD family. As to quaternary structure, the complex is composed of six subunits: RnfA, RnfB, RnfC, RnfD, RnfE and RnfG. Requires FMN as cofactor.

Its subcellular location is the cell inner membrane. Functionally, part of a membrane-bound complex that couples electron transfer with translocation of ions across the membrane. The protein is Ion-translocating oxidoreductase complex subunit D of Shewanella amazonensis (strain ATCC BAA-1098 / SB2B).